A 330-amino-acid polypeptide reads, in one-letter code: Phosphate acyltransferase (330 aa).

The protein belongs to the PlsX family. As to quaternary structure, homodimer. Probably interacts with PlsY.

The protein resides in the cytoplasm. It carries out the reaction a fatty acyl-[ACP] + phosphate = an acyl phosphate + holo-[ACP]. The protein operates within lipid metabolism; phospholipid metabolism. In terms of biological role, catalyzes the reversible formation of acyl-phosphate (acyl-PO(4)) from acyl-[acyl-carrier-protein] (acyl-ACP). This enzyme utilizes acyl-ACP as fatty acyl donor, but not acyl-CoA. The polypeptide is Phosphate acyltransferase (Lysinibacillus sphaericus (strain C3-41)).